We begin with the raw amino-acid sequence, 860 residues long: Leucine--tRNA ligase (860 aa).

Residues 42 to 52 (PYPSGRLHMGH) carry the 'HIGH' region motif. Residues 619-623 (KMSKS) carry the 'KMSKS' region motif. Residue Lys-622 coordinates ATP.

This sequence belongs to the class-I aminoacyl-tRNA synthetase family.

The protein resides in the cytoplasm. The enzyme catalyses tRNA(Leu) + L-leucine + ATP = L-leucyl-tRNA(Leu) + AMP + diphosphate. The chain is Leucine--tRNA ligase from Salmonella typhi.